A 421-amino-acid chain; its full sequence is UDP-N-acetylglucosamine 1-carboxyvinyltransferase (421 aa).

Residue 22–23 (KN) coordinates phosphoenolpyruvate. Residue Arg95 participates in UDP-N-acetyl-alpha-D-glucosamine binding. The active-site Proton donor is Cys119. A 2-(S-cysteinyl)pyruvic acid O-phosphothioketal modification is found at Cys119. Residues 124–128 (RPVDQ), Asp309, and Ile331 each bind UDP-N-acetyl-alpha-D-glucosamine.

This sequence belongs to the EPSP synthase family. MurA subfamily.

It is found in the cytoplasm. It carries out the reaction phosphoenolpyruvate + UDP-N-acetyl-alpha-D-glucosamine = UDP-N-acetyl-3-O-(1-carboxyvinyl)-alpha-D-glucosamine + phosphate. Its pathway is cell wall biogenesis; peptidoglycan biosynthesis. Its function is as follows. Cell wall formation. Adds enolpyruvyl to UDP-N-acetylglucosamine. The protein is UDP-N-acetylglucosamine 1-carboxyvinyltransferase of Leptothrix cholodnii (strain ATCC 51168 / LMG 8142 / SP-6) (Leptothrix discophora (strain SP-6)).